The following is a 639-amino-acid chain: Chaperone protein DnaK (639 aa).

The residue at position 198 (Thr-198) is a Phosphothreonine; by autocatalysis. The span at 603-618 (AKAQTQGGAQEGAAKQ) shows a compositional bias: low complexity. The tract at residues 603-639 (AKAQTQGGAQEGAAKQSNATADDVVDAEFEEVKDDKK) is disordered. Acidic residues predominate over residues 625 to 639 (DVVDAEFEEVKDDKK).

This sequence belongs to the heat shock protein 70 family.

Acts as a chaperone. This chain is Chaperone protein DnaK, found in Shewanella oneidensis (strain ATCC 700550 / JCM 31522 / CIP 106686 / LMG 19005 / NCIMB 14063 / MR-1).